A 65-amino-acid polypeptide reads, in one-letter code: Carboxypeptidase A inhibitor (65 aa).

Belongs to the protease inhibitor I44 family.

The protein localises to the secreted. Inhibits carboxypeptidase A. This chain is Carboxypeptidase A inhibitor, found in Ascaris suum (Pig roundworm).